Here is a 418-residue protein sequence, read N- to C-terminus: uncharacterized protein (418 aa).

Residues 1–24 (MSGTAGFITVSPGPPTEAPGGFPR) are disordered.

The protein to A.pernix APE_1276 and S.solfataricus SSO2105.

This is an uncharacterized protein from Aeropyrum pernix (strain ATCC 700893 / DSM 11879 / JCM 9820 / NBRC 100138 / K1).